Reading from the N-terminus, the 250-residue chain is Phosphoribosylaminoimidazole-succinocarboxamide synthase (250 aa).

It belongs to the SAICAR synthetase family.

The catalysed reaction is 5-amino-1-(5-phospho-D-ribosyl)imidazole-4-carboxylate + L-aspartate + ATP = (2S)-2-[5-amino-1-(5-phospho-beta-D-ribosyl)imidazole-4-carboxamido]succinate + ADP + phosphate + 2 H(+). It functions in the pathway purine metabolism; IMP biosynthesis via de novo pathway; 5-amino-1-(5-phospho-D-ribosyl)imidazole-4-carboxamide from 5-amino-1-(5-phospho-D-ribosyl)imidazole-4-carboxylate: step 1/2. The sequence is that of Phosphoribosylaminoimidazole-succinocarboxamide synthase from Chloroflexus aggregans (strain MD-66 / DSM 9485).